The chain runs to 94 residues: Beta-diguetoxin-Dc1a (94 aa).

The N-terminal stretch at 1–17 (MKVFVVLLCLSLAAVYA) is a signal peptide. Positions 18 to 38 (LEERLDKDADIMLDSPADMER) are excised as a propeptide. Disulfide bonds link C50–C63, C57–C77, C62–C91, and C79–C89.

It belongs to the neurotoxin 26 (DTX) family. As to expression, expressed by the venom gland.

Its subcellular location is the secreted. Insecticidal toxin. This toxin promotes opening of insect Nav channels. The toxin binds to the S1-S2 and S3-S4 loops in the domain II voltage-sensor of insect Nav channels (i.e., receptor site 4). The American cockroach P.americana is largely resistant to the effects of this toxin due to an unusual sequence within the domain II S1-S2 loop. In vivo, paralyzes lepidopteran and dipteran larvae. Paralyzed insects ultimately die from secondary effects of starvation and dehydration. The protein is Beta-diguetoxin-Dc1a of Diguetia canities (Desert bush spider).